Consider the following 694-residue polypeptide: N,N-dimethylglycine/sarcosine dehydrogenase (694 aa).

The protein in the N-terminal section; belongs to the NADH:flavin oxidoreductase/NADH oxidase family. In terms of assembly, monomer. The purified enzyme exists in the form of a monomer, dimer or polymer under non-denaturing conditions, but only the monomeric protein exhibits enzyme activity. The cofactor is FAD. NAD(+) serves as cofactor. It depends on NADP(+) as a cofactor.

It is found in the cytoplasm. The catalysed reaction is oxidized 2[4Fe-4S]-[ferredoxin] + N,N-dimethylglycine + H2O = reduced 2[4Fe-4S]-[ferredoxin] + sarcosine + formaldehyde + 2 H(+). It carries out the reaction oxidized 2[4Fe-4S]-[ferredoxin] + sarcosine + H2O = reduced 2[4Fe-4S]-[ferredoxin] + formaldehyde + glycine + 2 H(+). With respect to regulation, ca(2+) increases the activity by 12%, while the other metal ions tested have no or slightly inhibitory effects. The chelating agent EDTA inhibits the activity by 33%. Functionally, involved in degradation of glycine betaine. Catalyzes the demethylation of both N,N-dimethylglycine (DMG) and sarcosine, releasing formaldehyde and forming glycine as the final product. Does not show activity toward trimethylamine (TMA), histamine, glycine betaine (GB) or choline. The C-N bond in DMG is probably oxidized by removal of a hydride equivalent to form a labile imine intermediate, which is then spontaneously hydrolyzed in the presence of water, producing sarcosine and formaldehyde. The two protons subtracted from DMG are transferred to the non-covalently bound FAD, resulting in the reduced form of FAD, which is subsequently reoxidized by coupling with reduction of the enzyme-bound NAD(P)(+). Regeneration of NAD(P)(+) is achieved by electron transfer to the [4Fe-4S] cluster in the probable membrane-anchored ferredoxin csal_0991. The protein is N,N-dimethylglycine/sarcosine dehydrogenase of Chromohalobacter salexigens (strain ATCC BAA-138 / DSM 3043 / CIP 106854 / NCIMB 13768 / 1H11).